The following is a 377-amino-acid chain: UPF0754 membrane protein BPUM_0927 (377 aa).

The next 2 membrane-spanning stretches (helical) occupy residues M1 to T21 and F357 to F377.

Belongs to the UPF0754 family.

Its subcellular location is the cell membrane. The protein is UPF0754 membrane protein BPUM_0927 of Bacillus pumilus (strain SAFR-032).